The chain runs to 273 residues: NAD-dependent protein deacylase (273 aa).

Residues Met1–Ile269 form the Deacetylase sirtuin-type domain. NAD(+) contacts are provided by residues Gly25–Trp44 and Gln107–Asp110. Catalysis depends on His125, which acts as the Proton acceptor. Positions 133, 136, 173, and 176 each coordinate Zn(2+). Residues Gly211–Ser213, Asn237–Asn239, and Thr255 each bind NAD(+).

Belongs to the sirtuin family. Class III subfamily. It depends on Zn(2+) as a cofactor.

The protein localises to the cytoplasm. It catalyses the reaction N(6)-acetyl-L-lysyl-[protein] + NAD(+) + H2O = 2''-O-acetyl-ADP-D-ribose + nicotinamide + L-lysyl-[protein]. Its function is as follows. NAD-dependent protein deacetylase which modulates the activities of several proteins which are inactive in their acetylated form. The polypeptide is NAD-dependent protein deacylase (cobB) (Desulfosudis oleivorans (strain DSM 6200 / JCM 39069 / Hxd3) (Desulfococcus oleovorans)).